A 338-amino-acid chain; its full sequence is Glyceraldehyde-3-phosphate dehydrogenase (338 aa).

NAD(+) is bound by residues 11–12 (TI) and Gly109. A D-glyceraldehyde 3-phosphate-binding site is contributed by 138 to 140 (SCN). Cys139 acts as the Nucleophile in catalysis. Arg167 is a binding site for NAD(+). D-glyceraldehyde 3-phosphate contacts are provided by residues Thr169 and 192 to 193 (HA). Gln299 contributes to the NAD(+) binding site.

It belongs to the glyceraldehyde-3-phosphate dehydrogenase family. As to quaternary structure, homotetramer.

It localises to the cytoplasm. It catalyses the reaction D-glyceraldehyde 3-phosphate + phosphate + NADP(+) = (2R)-3-phospho-glyceroyl phosphate + NADPH + H(+). The enzyme catalyses D-glyceraldehyde 3-phosphate + phosphate + NAD(+) = (2R)-3-phospho-glyceroyl phosphate + NADH + H(+). The protein operates within carbohydrate degradation; glycolysis; pyruvate from D-glyceraldehyde 3-phosphate: step 1/5. In Thermoplasma volcanium (strain ATCC 51530 / DSM 4299 / JCM 9571 / NBRC 15438 / GSS1), this protein is Glyceraldehyde-3-phosphate dehydrogenase.